A 1070-amino-acid chain; its full sequence is Carbamoyl phosphate synthase large chain (1070 aa).

The interval methionine 1 to glutamate 401 is carboxyphosphate synthetic domain. ATP contacts are provided by arginine 129, arginine 169, glycine 175, glycine 176, lysine 208, isoleucine 210, glutamate 215, glycine 241, isoleucine 242, histidine 243, glutamine 284, and glutamate 298. The ATP-grasp 1 domain occupies arginine 133–valine 327. The Mg(2+) site is built by glutamine 284, glutamate 298, and asparagine 300. Positions 284, 298, and 300 each coordinate Mn(2+). The segment at isoleucine 402–serine 546 is oligomerization domain. A carbamoyl phosphate synthetic domain region spans residues threonine 547–glycine 929. An ATP-grasp 2 domain is found at glutamate 671–leucine 861. Arginine 707, arginine 746, valine 748, glutamate 752, glycine 777, valine 778, histidine 779, serine 780, glutamine 820, and glutamate 832 together coordinate ATP. Glutamine 820, glutamate 832, and asparagine 834 together coordinate Mg(2+). Mn(2+) is bound by residues glutamine 820, glutamate 832, and asparagine 834. Residues threonine 930–valine 1070 enclose the MGS-like domain. An allosteric domain region spans residues threonine 930–valine 1070.

Belongs to the CarB family. Composed of two chains; the small (or glutamine) chain promotes the hydrolysis of glutamine to ammonia, which is used by the large (or ammonia) chain to synthesize carbamoyl phosphate. Tetramer of heterodimers (alpha,beta)4. Requires Mg(2+) as cofactor. It depends on Mn(2+) as a cofactor.

It carries out the reaction hydrogencarbonate + L-glutamine + 2 ATP + H2O = carbamoyl phosphate + L-glutamate + 2 ADP + phosphate + 2 H(+). It catalyses the reaction hydrogencarbonate + NH4(+) + 2 ATP = carbamoyl phosphate + 2 ADP + phosphate + 2 H(+). The protein operates within amino-acid biosynthesis; L-arginine biosynthesis; carbamoyl phosphate from bicarbonate: step 1/1. Its pathway is pyrimidine metabolism; UMP biosynthesis via de novo pathway; (S)-dihydroorotate from bicarbonate: step 1/3. Large subunit of the glutamine-dependent carbamoyl phosphate synthetase (CPSase). CPSase catalyzes the formation of carbamoyl phosphate from the ammonia moiety of glutamine, carbonate, and phosphate donated by ATP, constituting the first step of 2 biosynthetic pathways, one leading to arginine and/or urea and the other to pyrimidine nucleotides. The large subunit (synthetase) binds the substrates ammonia (free or transferred from glutamine from the small subunit), hydrogencarbonate and ATP and carries out an ATP-coupled ligase reaction, activating hydrogencarbonate by forming carboxy phosphate which reacts with ammonia to form carbamoyl phosphate. In Listeria monocytogenes serotype 4a (strain HCC23), this protein is Carbamoyl phosphate synthase large chain.